The primary structure comprises 573 residues: Proline--tRNA ligase (573 aa).

This sequence belongs to the class-II aminoacyl-tRNA synthetase family. ProS type 1 subfamily. In terms of assembly, homodimer.

Its subcellular location is the cytoplasm. The enzyme catalyses tRNA(Pro) + L-proline + ATP = L-prolyl-tRNA(Pro) + AMP + diphosphate. In terms of biological role, catalyzes the attachment of proline to tRNA(Pro) in a two-step reaction: proline is first activated by ATP to form Pro-AMP and then transferred to the acceptor end of tRNA(Pro). As ProRS can inadvertently accommodate and process non-cognate amino acids such as alanine and cysteine, to avoid such errors it has two additional distinct editing activities against alanine. One activity is designated as 'pretransfer' editing and involves the tRNA(Pro)-independent hydrolysis of activated Ala-AMP. The other activity is designated 'posttransfer' editing and involves deacylation of mischarged Ala-tRNA(Pro). The misacylated Cys-tRNA(Pro) is not edited by ProRS. The chain is Proline--tRNA ligase from Elusimicrobium minutum (strain Pei191).